Here is a 346-residue protein sequence, read N- to C-terminus: Cyclin-dependent kinase 20 (346 aa).

The Protein kinase domain occupies Y4 to F288. Residues I10–V18 and K33 each bind ATP. D127 acts as the Proton acceptor in catalysis. Positions S298–H324 are disordered. Pro residues predominate over residues P303–P318.

This sequence belongs to the protein kinase superfamily. CMGC Ser/Thr protein kinase family. CDC2/CDKX subfamily. As to quaternary structure, monomer. Interacts with MAK. Interacts with TBC1D32.

It localises to the nucleus. The protein resides in the cytoplasm. Its subcellular location is the cell projection. It is found in the cilium. The catalysed reaction is L-seryl-[protein] + ATP = O-phospho-L-seryl-[protein] + ADP + H(+). It carries out the reaction L-threonyl-[protein] + ATP = O-phospho-L-threonyl-[protein] + ADP + H(+). Functionally, involved in cell growth. Activates CDK2, a kinase involved in the control of the cell cycle, by phosphorylating residue 'Thr-160'. Required for high-level Shh responses in the developing neural tube. Together with TBC1D32, controls the structure of the primary cilium by coordinating assembly of the ciliary membrane and axoneme, allowing GLI2 to be properly activated in response to SHH signaling. In Mus musculus (Mouse), this protein is Cyclin-dependent kinase 20 (Cdk20).